The following is a 283-amino-acid chain: 4-diphosphocytidyl-2-C-methyl-D-erythritol kinase (283 aa).

Residue K10 is part of the active site. P99–S109 provides a ligand contact to ATP. The active site involves D141.

The protein belongs to the GHMP kinase family. IspE subfamily. In terms of assembly, homodimer.

The catalysed reaction is 4-CDP-2-C-methyl-D-erythritol + ATP = 4-CDP-2-C-methyl-D-erythritol 2-phosphate + ADP + H(+). The protein operates within isoprenoid biosynthesis; isopentenyl diphosphate biosynthesis via DXP pathway; isopentenyl diphosphate from 1-deoxy-D-xylulose 5-phosphate: step 3/6. In terms of biological role, catalyzes the phosphorylation of the position 2 hydroxy group of 4-diphosphocytidyl-2C-methyl-D-erythritol. This chain is 4-diphosphocytidyl-2-C-methyl-D-erythritol kinase, found in Salmonella gallinarum (strain 287/91 / NCTC 13346).